The primary structure comprises 356 residues: HTH-type transcriptional regulator AglR (356 aa).

The 57-residue stretch at 1–57 (MPVNLKQLAELLGLSQTTVSRALNGYPEVNAETRARVLEAVRETGYRPNRAAQRLAT) folds into the HTH lacI-type domain. The H-T-H motif DNA-binding region spans 5–24 (LKQLAELLGLSQTTVSRALN). Positions 337–356 (TGPAPDRSPLPNPSPQVGGA) are disordered.

In terms of biological role, probable regulatory protein for the binding-protein-dependent transport system for alpha-glucosides such as sucrose, maltose and trehalose. The sequence is that of HTH-type transcriptional regulator AglR (aglR) from Rhizobium meliloti (strain 1021) (Ensifer meliloti).